The sequence spans 754 residues: Carbon catabolite repressor protein 4 homolog 6 (754 aa).

2 disordered regions span residues 34–65 and 85–176; these read PYRGARGRGRGRGGRSFSDRPYNDDAGRDQFV and EPYR…KTPP. Basic and acidic residues predominate over residues 50–61; the sequence is FSDRPYNDDAGR. Polar residues-rich tracts occupy residues 96-106 and 116-133; these read QRQQPPFNQNY and GQWQQFRQPNQFPSNQNY. Residues 162 to 171 show a composition bias toward basic and acidic residues; that stretch reads KPSDYREWEY. Glu237 contacts Mg(2+). Disordered regions lie at residues 404–431 and 494–558; these read VSAEFRPPRPENYTTRYQSANKSPQGQV and IENR…DQDI. Polar residues-rich tracts occupy residues 415–431, 503–525, and 534–545; these read NYTTRYQSANKSPQGQV, GNLSTAEDLSSLTISDTEPQHAS, and DRSVSSGLSETE.

The protein belongs to the CCR4/nocturin family. Component of the CCR4-NOT complex, at least composed of CRR4 and CAF1 proteins. Requires Mg(2+) as cofactor.

Its subcellular location is the nucleus. The protein localises to the cytoplasm. It carries out the reaction Exonucleolytic cleavage of poly(A) to 5'-AMP.. Acts as a catalytic component of the CCR4-NOT core complex, which in the nucleus seems to be a general transcription factor, and in the cytoplasm the major mRNA deadenylase involved in mRNA turnover. The protein is Carbon catabolite repressor protein 4 homolog 6 (CCR4-6) of Arabidopsis thaliana (Mouse-ear cress).